The chain runs to 981 residues: RNA polymerase II assembly factor RTP1 (981 aa).

9 HEAT repeats span residues 64-101, 161-199, 226-261, 366-403, 609-646, 655-692, 765-799, 800-836, and 945-980; these read SNNN…LLPI, DTLS…ILLG, YTLF…RRPE, KELN…TTPG, KDVL…GEET, SSYK…KLQS, ISLE…LCEL, EPET…NYIQ, and EYNY…VLDS. Residues 630–651 show a composition bias toward acidic residues; sequence QEVEADSDDEVEEGEETEELDP. The interval 630 to 652 is disordered; it reads QEVEADSDDEVEEGEETEELDPN.

The protein belongs to the Tango6 family. As to quaternary structure, interacts with RNA polymerase II subunits RPB2 and RPB3. Interacts with the R2TP complex. Interacts with the nuclear pore complex subunits NUP100 and NUP116.

Its subcellular location is the cytoplasm. In terms of biological role, required for the cytoplasmic assembly and the nuclear import of RNA polymerase II. May facilitate the starting interaction between RNA polymerase II subunits RPB2 and RPB3 and the subsequent interaction of the resulting complex with subunit RPB1. May also participate in the transport of RNA polymerase II through the nuclear pore complex. The protein is RNA polymerase II assembly factor RTP1 of Saccharomyces cerevisiae (strain ATCC 204508 / S288c) (Baker's yeast).